The sequence spans 206 residues: Flavin prenyltransferase UbiX (206 aa).

Residues 14–16, T40, 101–104, and R136 each bind FMN; these read GAS and SMGT. Residues Y166 and K182 each coordinate dimethylallyl phosphate.

It belongs to the UbiX/PAD1 family.

The catalysed reaction is dimethylallyl phosphate + FMNH2 = prenylated FMNH2 + phosphate. Flavin prenyltransferase that catalyzes the synthesis of the prenylated FMN cofactor (prenyl-FMN) for 4-hydroxy-3-polyprenylbenzoic acid decarboxylase UbiD. The prenyltransferase is metal-independent and links a dimethylallyl moiety from dimethylallyl monophosphate (DMAP) to the flavin N5 and C6 atoms of FMN. In Halalkalibacterium halodurans (strain ATCC BAA-125 / DSM 18197 / FERM 7344 / JCM 9153 / C-125) (Bacillus halodurans), this protein is Flavin prenyltransferase UbiX.